Here is a 127-residue protein sequence, read N- to C-terminus: Small integral membrane protein 33 (127 aa).

N15 is a glycosylation site (N-linked (GlcNAc...) asparagine). Residues 38–58 (PLLAAIIAAFVLLAICIVLAV) traverse the membrane as a helical segment.

It is found in the membrane. The polypeptide is Small integral membrane protein 33 (Mus musculus (Mouse)).